The chain runs to 338 residues: Phenylalanine--tRNA ligase alpha subunit (338 aa).

Glu-252 contributes to the Mg(2+) binding site.

This sequence belongs to the class-II aminoacyl-tRNA synthetase family. Phe-tRNA synthetase alpha subunit type 1 subfamily. As to quaternary structure, tetramer of two alpha and two beta subunits. It depends on Mg(2+) as a cofactor.

The protein resides in the cytoplasm. The enzyme catalyses tRNA(Phe) + L-phenylalanine + ATP = L-phenylalanyl-tRNA(Phe) + AMP + diphosphate + H(+). The protein is Phenylalanine--tRNA ligase alpha subunit of Pseudomonas syringae pv. syringae (strain B728a).